The chain runs to 250 residues: MSNDPTHQFLVNKIVPIEIGGIDFSFTNASLFMVATVGVAAGFLYLTTSQRGVIPTRMQSVSEVSYEFIASMLREGAGSHGMKFFPMVFSLFMFILTANLLGMFPYFFTVTSQIIVTFALAVFVIGTVILYGFYKHGFGFLKLFVPHGVPGALLPLVVSIEVISFLSRPISLSVRLFANMLAGHITLKVFAGFVASLSAFGALGIGGAILPLIMTVALTGLEFLVAFLQAYVFAVLTCMYLNDAVHPGSH.

The next 6 helical transmembrane spans lie at 26-46, 84-104, 114-134, 143-163, 193-213, and 216-236; these read FTNA…FLYL, FFPM…LGMF, IIVT…YGFY, LFVP…IEVI, FVAS…LPLI, and VALT…FAVL.

This sequence belongs to the ATPase A chain family. F-type ATPases have 2 components, CF(1) - the catalytic core - and CF(0) - the membrane proton channel. CF(1) has five subunits: alpha(3), beta(3), gamma(1), delta(1), epsilon(1). CF(0) has three main subunits: a(1), b(2) and c(9-12). The alpha and beta chains form an alternating ring which encloses part of the gamma chain. CF(1) is attached to CF(0) by a central stalk formed by the gamma and epsilon chains, while a peripheral stalk is formed by the delta and b chains.

It localises to the cell inner membrane. Key component of the proton channel; it plays a direct role in the translocation of protons across the membrane. The protein is ATP synthase subunit a of Sinorhizobium fredii (strain NBRC 101917 / NGR234).